The primary structure comprises 147 residues: MDNNNNKKLFNTHGSAFDDSKIYFRDVDCGVLCFNIHNEQSFNNLNHWMSLFNENVPFVLIGTKSDIERTEKSISKERIEQWCKQIEDQGIVKEKIHYFETSAKLSTNIIEAYETIVKIALNQYKNKQKNSINISIEPEKPKGICWW.

GTP is bound by residues 11 to 15 (NTHGS) and 63 to 66 (TKSD). Residue Cys-145 is the site of S-geranylgeranyl cysteine attachment.

This sequence belongs to the small GTPase superfamily. Rab family.

Its subcellular location is the cell membrane. This is Ras-related protein RabK2 (rabK2) from Dictyostelium discoideum (Social amoeba).